Consider the following 113-residue polypeptide: T cell receptor alpha variable 36/delta variable 7 (113 aa).

An N-terminal signal peptide occupies residues 1–21; sequence MMKCPQALLAIFWLLLSWVSS. The Ig-like domain occupies 23-113; sequence DKVVQSPLSL…DSAIYLCAVE (91 aa). N-linked (GlcNAc...) asparagine glycosylation is found at Asn-43 and Asn-96. A disulfide bridge connects residues Cys-44 and Cys-110.

In terms of assembly, alpha-beta TR is a heterodimer composed of an alpha and beta chain; disulfide-linked. The alpha-beta TR is associated with the transmembrane signaling CD3 coreceptor proteins to form the TR-CD3 (TcR or TCR). The assembly of alpha-beta TR heterodimers with CD3 occurs in the endoplasmic reticulum where a single alpha-beta TR heterodimer associates with one CD3D-CD3E heterodimer, one CD3G-CD3E heterodimer and one CD247 homodimer forming a stable octameric structure. CD3D-CD3E and CD3G-CD3E heterodimers preferentially associate with TR alpha and TR beta chains, respectively. The association of the CD247 homodimer is the last step of TcR assembly in the endoplasmic reticulum and is required for transport to the cell surface.

The protein localises to the cell membrane. Functionally, v region of the variable domain of T cell receptor (TR) alpha chain that participates in the antigen recognition. Alpha-beta T cell receptors are antigen specific receptors which are essential to the immune response and are present on the cell surface of T lymphocytes. Recognize peptide-major histocompatibility (MH) (pMH) complexes that are displayed by antigen presenting cells (APC), a prerequisite for efficient T cell adaptive immunity against pathogens. Binding of alpha-beta TR to pMH complex initiates TR-CD3 clustering on the cell surface and intracellular activation of LCK that phosphorylates the ITAM motifs of CD3G, CD3D, CD3E and CD247 enabling the recruitment of ZAP70. In turn ZAP70 phosphorylates LAT, which recruits numerous signaling molecules to form the LAT signalosome. The LAT signalosome propagates signal branching to three major signaling pathways, the calcium, the mitogen-activated protein kinase (MAPK) kinase and the nuclear factor NF-kappa-B (NF-kB) pathways, leading to the mobilization of transcription factors that are critical for gene expression and essential for T cell growth and differentiation. The T cell repertoire is generated in the thymus, by V-(D)-J rearrangement. This repertoire is then shaped by intrathymic selection events to generate a peripheral T cell pool of self-MH restricted, non-autoaggressive T cells. Post-thymic interaction of alpha-beta TR with the pMH complexes shapes TR structural and functional avidity. This chain is T cell receptor alpha variable 36/delta variable 7, found in Homo sapiens (Human).